We begin with the raw amino-acid sequence, 205 residues long: Small ribosomal subunit protein uS4 (205 aa).

The tract at residues 19–45 is disordered; the sequence is IWGRPKSPVNRREYGPGQHGQRRKGKL. The region spanning 94–157 is the S4 RNA-binding domain; that stretch reads SRLDAVVYRA…KQLAIVLEAV (64 aa).

The protein belongs to the universal ribosomal protein uS4 family. In terms of assembly, part of the 30S ribosomal subunit. Contacts protein S5. The interaction surface between S4 and S5 is involved in control of translational fidelity.

Its function is as follows. One of the primary rRNA binding proteins, it binds directly to 16S rRNA where it nucleates assembly of the body of the 30S subunit. Functionally, with S5 and S12 plays an important role in translational accuracy. This Brucella suis biovar 1 (strain 1330) protein is Small ribosomal subunit protein uS4.